The primary structure comprises 280 residues: UBX domain-containing protein 10 (280 aa).

Residues 41 to 94 (SAKGRTRPSLQKSQGVEVCAHHIPSPPPAIPYELPSSQKPGACAPKSPNQGASD) form a disordered region. S87 carries the phosphoserine modification. Residues 194-271 (DQEPRLLLAV…RIPHKSVLGI (78 aa)) form the UBX domain.

The protein belongs to the UBXN10 family. In terms of assembly, interacts with CLUAP1; the interaction is direct and mediates interaction with the intraflagellar transport complex B (IFT-B). Interacts with VCP; the interaction is direct.

The protein resides in the cell projection. It is found in the cilium. Functionally, VCP/p97-binding protein required for ciliogenesis. Acts as a tethering factor that facilitates recruitment of VCP/p97 to the intraflagellar transport complex B (IFT-B) in cilia. UBX domain-containing proteins act as tethering factors for VCP/p97 and may specify substrate specificity of VCP/p97. The sequence is that of UBX domain-containing protein 10 from Homo sapiens (Human).